The following is a 617-amino-acid chain: Bifunctional TH2 protein, mitochondrial (617 aa).

A mitochondrion-targeting transit peptide spans 1 to 28; sequence MRFLFPTRLINNSSLGLLRSPHTTAPIR. D107 serves as a coordination point for substrate. C213 acts as the Nucleophile in catalysis. Substrate contacts are provided by Y217 and Y244. The Proton donor role is filled by E286.

The protein in the N-terminal section; belongs to the TenA family. In the C-terminal section; belongs to the HAD-like hydrolase superfamily.

Its subcellular location is the mitochondrion. It is found in the cytoplasm. It catalyses the reaction thiamine phosphate + H2O = thiamine + phosphate. The enzyme catalyses 4-amino-5-aminomethyl-2-methylpyrimidine + H2O = 4-amino-5-hydroxymethyl-2-methylpyrimidine + NH4(+). Functionally, may be involved in the salvage of thiamine breakdown products. This protein has a haloacid dehalogenase family domain fused to its TenA domain. Phosphatase with the highest activity against thiamine monophosphate (ThMP) and, with a lower activity, against thiamine diphosphate (ThDP), flavin mononucleotide, inorganic pyrophosphate, CTP and dATP. Has a thiamine salvage hydrolase activity, but only against 4-amino-5-aminomethyl-2-methylpyrimidine (amino-HMP) and not against N-formylamino-HMP, desthiothiamine, thiamine, ThMP, and ThDP. In Arabidopsis thaliana (Mouse-ear cress), this protein is Bifunctional TH2 protein, mitochondrial.